Here is a 461-residue protein sequence, read N- to C-terminus: D-phenylhydantoinase (461 aa).

The a divalent metal cation site is built by H59, H61, and K151. K151 carries the N6-carboxylysine modification. Y156 lines the substrate pocket. A divalent metal cation contacts are provided by H182 and H239. Substrate is bound at residue S286. D313 provides a ligand contact to a divalent metal cation. N335 is a binding site for substrate.

This sequence belongs to the metallo-dependent hydrolases superfamily. Hydantoinase/dihydropyrimidinase family. As to quaternary structure, homotetramer. A divalent metal cation is required as a cofactor. Carboxylation allows a single lysine to coordinate two divalent metal cations.

The catalysed reaction is D-5-phenylhydantoin + H2O = N-carbamoyl-D-phenylglycine + H(+). Functionally, catalyzes the stereospecific hydrolysis of the cyclic amide bond of D-hydantoin derivatives with an aromatic side chains at the 5'-position. Has no activity on dihydropyrimidines. The physiological function is unknown. This is D-phenylhydantoinase from Escherichia coli O9:H4 (strain HS).